A 257-amino-acid polypeptide reads, in one-letter code: 1-acyl-sn-glycerol-3-phosphate acyltransferase (257 aa).

A helical membrane pass occupies residues 10 to 30 (VLFYLLLSASAFVWGTLSFFI). Residues 82–87 (HQSTWE) carry the HXXXXD motif motif. Residues 105 to 125 (ELLYVPFFGWALALLKPIAID) form a helical membrane-spanning segment.

Belongs to the 1-acyl-sn-glycerol-3-phosphate acyltransferase family.

The protein resides in the cell inner membrane. It catalyses the reaction a 1-acyl-sn-glycero-3-phosphate + an acyl-CoA = a 1,2-diacyl-sn-glycero-3-phosphate + CoA. It participates in phospholipid metabolism; CDP-diacylglycerol biosynthesis; CDP-diacylglycerol from sn-glycerol 3-phosphate: step 2/3. Functionally, converts lysophosphatidic acid (LPA) into phosphatidic acid by incorporating acyl moiety at the 2 position. This chain is 1-acyl-sn-glycerol-3-phosphate acyltransferase, found in Pseudomonas aeruginosa (strain ATCC 15692 / DSM 22644 / CIP 104116 / JCM 14847 / LMG 12228 / 1C / PRS 101 / PAO1).